Reading from the N-terminus, the 269-residue chain is MADHMMAMNHGRFPDGTNGLHHHPAHRMGMGQFPSPHHHQQQQPQHAFNALMGEHIHYGAGNMNATSGIRHAMGPGTVNGGHPPSALAPAARFNNSQFMGPPVASQGGSLPASMQLQKLNNQYFNHHPYPHNHYMPDLHPTAGHQMNGTNQHFRDCNPKHSGGSSTPGGAGGSGTPGGSGGTSGGAGGSSAGGSGGGSTMPASVAHVPAAMLPPNVIDTDFIDEEVLMSLVIEMGLDRIKELPELWLGQNEFDFMTDFVCKQQPSRVSC.

Residues 142–200 form a disordered region; the sequence is AGHQMNGTNQHFRDCNPKHSGGSSTPGGAGGSGTPGGSGGTSGGAGGSSAGGSGGGSTM. Residues 165–198 show a composition bias toward gly residues; it reads STPGGAGGSGTPGGSGGTSGGAGGSSAGGSGGGS.

Belongs to the CITED family. Interacts (via C-terminus) with EP300 (via CH1 domain); the interaction is stimulated in response to hypoxia. Interacts with PPARA. Interacts (via C-terminus) with TFAP2A, TFAP2B and TFAP2C. Interacts (via C-terminus) with SMAD2. Interacts (via C-terminus) with SMAD3 (via MH2 domain). Interacts with LHX2 (via LIM domains). Interacts with WT1 isoform 1 and isoform 3. Ubiquitous.

It is found in the nucleus. Its function is as follows. Transcriptional coactivator of the p300/CBP-mediated transcription complex. Acts as a bridge, linking TFAP2 transcription factors and the p300/CBP transcriptional coactivator complex in order to stimulate TFAP2-mediated transcriptional activation. Positively regulates TGF-beta signaling through its association with the SMAD/p300/CBP-mediated transcriptional coactivator complex. Stimulates the peroxisome proliferator-activated receptors PPARA transcriptional activity. Enhances estrogen-dependent transactivation mediated by estrogen receptors. Also acts as a transcriptional corepressor; interferes with the binding of the transcription factors HIF1A or STAT2 and the p300/CBP transcriptional coactivator complex. Participates in sex determination and early gonad development by stimulating transcription activation of SRY. Plays a role in controlling left-right patterning during embryogenesis; potentiates transcriptional activation of NODAL-mediated gene transcription in the left lateral plate mesoderm (LPM). Plays an essential role in differentiation of the adrenal cortex from the adrenogonadal primordium (AGP); stimulates WT1-mediated transcription activation thereby up-regulating the nuclear hormone receptor NR5A1 promoter activity. Associates with chromatin to the PITX2 P1 promoter region. This is Cbp/p300-interacting transactivator 2 (Cited2) from Mus musculus (Mouse).